We begin with the raw amino-acid sequence, 343 residues long: Ubiquitin thioesterase OTU1 (343 aa).

Residues 45 to 123 form a UBX-like region; it reads RCKAKGGTHV…IVEEDQTRPK (79 aa). In terms of domain architecture, OTU spans 144-269; it reads LTRTAVPADN…GIHYDPLQRN (126 aa). Residues 149–155 form a cys-loop region; the sequence is VPADNSC. Residue Asp-152 is part of the active site. The Nucleophile role is filled by Cys-155. Positions 208–218 are variable-loop; the sequence is IRRDDTWGGAI. The tract at residues 258–262 is his-loop; the sequence is YDGIH. Ile-261 contributes to the substrate binding site. Residue His-262 is part of the active site. An S2 site region spans residues 286–291; the sequence is DIVLVQ. Residues 313–337 form a C2H2-type zinc finger; the sequence is LRCMLCQKGLTGQAEARDHARETGH. His-337 is a catalytic residue.

In terms of assembly, interacts with VCP; the interaction is direct. Interacts with FAF2/UBXD8. Interacts with DERL1; however interaction is dependent on the UBAX-like region, suggesting that it may be indirect. Interacts with PLAA, UBXN6 and VCP; may form a complex involved in macroautophagy.

It is found in the cytoplasm. The catalysed reaction is Thiol-dependent hydrolysis of ester, thioester, amide, peptide and isopeptide bonds formed by the C-terminal Gly of ubiquitin (a 76-residue protein attached to proteins as an intracellular targeting signal).. Hydrolase that can remove conjugated ubiquitin from proteins and participates in endoplasmic reticulum-associated degradation (ERAD) for misfolded lumenal proteins. May act by triming the ubiquitin chain on the associated substrate to facilitate their threading through the VCP/p97 pore. Ubiquitin moieties on substrates may present a steric impediment to the threading process when the substrate is transferred to the VCP pore and threaded through VCP's axial channel. Mediates deubiquitination of 'Lys-27'-, 'Lys-29'- and 'Lys-33'-linked polyubiquitin chains. Also able to hydrolyze 'Lys-11'-linked ubiquitin chains. Cleaves both polyubiquitin and di-ubiquitin. May play a role in macroautophagy, regulating for instance the clearance of damaged lysosomes. May recruit PLAA, UBXN6 and VCP to damaged lysosome membranes decorated with K48-linked ubiquitin chains and remove these chains allowing autophagosome formation. This is Ubiquitin thioesterase OTU1 (Yod1) from Rattus norvegicus (Rat).